We begin with the raw amino-acid sequence, 421 residues long: Synaptotagmin-1 (421 aa).

At 1–57 the chain is on the vesicular side; it reads MVSASRPEALAAPVTTVATLVPHNATEPASPGEGKEDAFSKLKQKFMNELHKIPLPP. An N-linked (GlcNAc...) asparagine glycan is attached at Asn24. A helical transmembrane segment spans residues 58-79; it reads WALIAIAIVAVLLVVTCCFCVC. 5 S-palmitoyl cysteine lipidation sites follow: Cys74, Cys75, Cys77, Cys79, and Cys82. Topologically, residues 80-421 are cytoplasmic; that stretch reads KKCLFKKKNK…EVDAMLAVKK (342 aa). The segment at 112 to 141 is disordered; it reads TMKDQALKDDDAETGLTDGEEKEEPKEEEK. Residues 121-133 show a composition bias toward acidic residues; the sequence is DDAETGLTDGEEK. The residue at position 128 (Thr128) is a Phosphothreonine. The segment at 135–381 is phospholipid binding; the sequence is EPKEEEKLGK…AIGKVFVGYN (247 aa). The region spanning 141–260 is the C2 1 domain; sequence KLGKLQYSLD…DFGHVTEEWR (120 aa). Positions 171, 172, and 178 each coordinate Ca(2+). Residue Tyr229 is modified to Phosphotyrosine. Asp230, Phe231, Asp232, Ser235, Lys236, and Asp238 together coordinate Ca(2+). Ser264 is modified (phosphoserine). Residues 272 to 405 form the C2 2 domain; that stretch reads KLGDICFSLR…NPRRPIAQWH (134 aa). Ca(2+)-binding residues include Asp303 and Asp309. A phosphoserine mark is found at Ser342 and Ser344. Residues Asp363, Asp365, and Asp371 each contribute to the Ca(2+) site.

It belongs to the synaptotagmin family. As to quaternary structure, homotetramer. Heterodimer; heterodimerizes with SYT2 in presence of calcium. Interacts with SCAMP5. Interacts with STON2. Forms a complex with SV2B, syntaxin 1 and SNAP25. Interacts with SV2A, SV2B and SV2C. Interacts with RIMS1. Interacts with PRRT2. Interacts with DNAJC5 in a phosphorylation-dependent manner. Interacts (via N-terminus) with RAB3A. Interacts with SYT12. Interacts with calmodulin. Interacts with DNM1 (via C-terminal proline-rich domain (PRD)); this interaction facilitates vesicle fission during clathrin-mediated endocytosis (CME). The cofactor is Ca(2+). In terms of processing, glycosylated. As to expression, expressed in the brain and adrenal medulla (at protein level).

It localises to the cytoplasmic vesicle. The protein localises to the secretory vesicle membrane. It is found in the secretory vesicle. The protein resides in the synaptic vesicle membrane. Its subcellular location is the chromaffin granule membrane. It localises to the cytoplasm. Calcium sensor that participates in triggering neurotransmitter release at the synapse. May have a regulatory role in the membrane interactions during trafficking of synaptic vesicles at the active zone of the synapse. It binds acidic phospholipids with a specificity that requires the presence of both an acidic head group and a diacyl backbone. A Ca(2+)-dependent interaction between synaptotagmin and putative receptors for activated protein kinase C has also been reported. It can bind to at least three additional proteins in a Ca(2+)-independent manner; these are neurexins, syntaxin and AP2. Plays a role in dendrite formation by melanocytes. In Mus musculus (Mouse), this protein is Synaptotagmin-1.